A 252-amino-acid polypeptide reads, in one-letter code: Ribosomal RNA small subunit methyltransferase NEP1 (252 aa).

S-adenosyl-L-methionine-binding positions include L180, G207, 212 to 214 (GKD), and 227 to 232 (LSNYPL).

Belongs to the class IV-like SAM-binding methyltransferase superfamily. RNA methyltransferase NEP1 family. As to quaternary structure, homodimer. Interacts with snoRNA U3. Interacts with NOP14 and MPP10. Component of the ribosomal small subunit (SSU) processome composed of at least 40 protein subunits and snoRNA U3.

Its subcellular location is the nucleus. It localises to the nucleolus. The enzyme catalyses pseudouridine(1191) in yeast 18S rRNA + S-adenosyl-L-methionine = N(1)-methylpseudouridine(1191) in yeast 18S rRNA + S-adenosyl-L-homocysteine + H(+). In terms of biological role, S-adenosyl-L-methionine-dependent pseudouridine N(1)-methyltransferase that methylates pseudouridine at position 1189 (Psi1189) in 18S rRNA. Involved the biosynthesis of the hypermodified N1-methyl-N3-(3-amino-3-carboxypropyl) pseudouridine (m1acp3-Psi) conserved in eukaryotic 18S rRNA. N1-methylation is independent on acp-modification at the N3-position of U1191. Also has an essential role in 40S ribosomal subunit biogenesis independent on its methyltransferase activity, facilitating the incorporation of ribosomal protein S19 (RPS19A/RPS19B) during the formation of pre-ribosomes. The chain is Ribosomal RNA small subunit methyltransferase NEP1 from Saccharomyces cerevisiae (strain ATCC 204508 / S288c) (Baker's yeast).